The primary structure comprises 529 residues: Lysine--tRNA ligase (529 aa).

The 'HIGH' region signature appears at 44 to 52 (PSGLPHIGT). The 'KMSKS' region motif lies at 290–294 (KISKS). Position 293 (K293) interacts with ATP.

This sequence belongs to the class-I aminoacyl-tRNA synthetase family.

It localises to the cytoplasm. The catalysed reaction is tRNA(Lys) + L-lysine + ATP = L-lysyl-tRNA(Lys) + AMP + diphosphate. The chain is Lysine--tRNA ligase from Rickettsia akari (strain Hartford).